We begin with the raw amino-acid sequence, 221 residues long: Protein-L-isoaspartate O-methyltransferase (221 aa).

The active site involves serine 64.

Belongs to the methyltransferase superfamily. L-isoaspartyl/D-aspartyl protein methyltransferase family.

It localises to the cytoplasm. The enzyme catalyses [protein]-L-isoaspartate + S-adenosyl-L-methionine = [protein]-L-isoaspartate alpha-methyl ester + S-adenosyl-L-homocysteine. Catalyzes the methyl esterification of L-isoaspartyl residues in peptides and proteins that result from spontaneous decomposition of normal L-aspartyl and L-asparaginyl residues. It plays a role in the repair and/or degradation of damaged proteins. The polypeptide is Protein-L-isoaspartate O-methyltransferase (Cytophaga hutchinsonii (strain ATCC 33406 / DSM 1761 / CIP 103989 / NBRC 15051 / NCIMB 9469 / D465)).